The following is a 184-amino-acid chain: 3-hydroxyanthranilate 3,4-dioxygenase (184 aa).

R44 contributes to the O2 binding site. Fe cation-binding residues include H48, E54, and H92. E54 is a binding site for substrate. R96 and E106 together coordinate substrate. 4 residues coordinate a divalent metal cation: C121, C126, C162, and C165.

The protein belongs to the 3-HAO family. Requires Fe(2+) as cofactor.

It is found in the cytoplasm. The enzyme catalyses 3-hydroxyanthranilate + O2 = (2Z,4Z)-2-amino-3-carboxymuconate 6-semialdehyde. The protein operates within cofactor biosynthesis; NAD(+) biosynthesis; quinolinate from L-kynurenine: step 3/3. Catalyzes the oxidative ring opening of 3-hydroxyanthranilate to 2-amino-3-carboxymuconate semialdehyde, which spontaneously cyclizes to quinolinate. The protein is 3-hydroxyanthranilate 3,4-dioxygenase of Pyricularia oryzae (strain 70-15 / ATCC MYA-4617 / FGSC 8958) (Rice blast fungus).